The following is a 176-amino-acid chain: NAD(P)H-quinone oxidoreductase subunit 6, chloroplastic (176 aa).

5 helical membrane-spanning segments follow: residues Phe-10 to Thr-30, Pro-32 to Leu-52, Ala-61 to Met-81, Val-95 to Ile-115, and Phe-152 to Ala-172.

The protein belongs to the complex I subunit 6 family. NDH is composed of at least 16 different subunits, 5 of which are encoded in the nucleus.

Its subcellular location is the plastid. The protein localises to the chloroplast thylakoid membrane. The catalysed reaction is a plastoquinone + NADH + (n+1) H(+)(in) = a plastoquinol + NAD(+) + n H(+)(out). It carries out the reaction a plastoquinone + NADPH + (n+1) H(+)(in) = a plastoquinol + NADP(+) + n H(+)(out). NDH shuttles electrons from NAD(P)H:plastoquinone, via FMN and iron-sulfur (Fe-S) centers, to quinones in the photosynthetic chain and possibly in a chloroplast respiratory chain. The immediate electron acceptor for the enzyme in this species is believed to be plastoquinone. Couples the redox reaction to proton translocation, and thus conserves the redox energy in a proton gradient. The polypeptide is NAD(P)H-quinone oxidoreductase subunit 6, chloroplastic (ndhG) (Manihot esculenta (Cassava)).